A 304-amino-acid chain; its full sequence is Large ribosomal subunit protein uL2m (304 aa).

Residues 1 to 60 constitute a mitochondrion transit peptide; that stretch reads MALCALASALRSLSLASPAITARVPTLLPVGQSNVLLQLPSALALPAHRPVHMSADRSAK.

Belongs to the universal ribosomal protein uL2 family. As to quaternary structure, component of the mitochondrial ribosome large subunit (39S) which comprises a 16S rRNA and about 50 distinct proteins.

It is found in the mitochondrion. The chain is Large ribosomal subunit protein uL2m (Mrpl2) from Rattus norvegicus (Rat).